Reading from the N-terminus, the 345-residue chain is S-adenosylmethionine:tRNA ribosyltransferase-isomerase (345 aa).

The protein belongs to the QueA family. As to quaternary structure, monomer.

It is found in the cytoplasm. The catalysed reaction is 7-aminomethyl-7-carbaguanosine(34) in tRNA + S-adenosyl-L-methionine = epoxyqueuosine(34) in tRNA + adenine + L-methionine + 2 H(+). The protein operates within tRNA modification; tRNA-queuosine biosynthesis. In terms of biological role, transfers and isomerizes the ribose moiety from AdoMet to the 7-aminomethyl group of 7-deazaguanine (preQ1-tRNA) to give epoxyqueuosine (oQ-tRNA). In Helicobacter pylori (strain ATCC 700392 / 26695) (Campylobacter pylori), this protein is S-adenosylmethionine:tRNA ribosyltransferase-isomerase.